The sequence spans 373 residues: ATP phosphoribosyltransferase regulatory subunit (373 aa).

Belongs to the class-II aminoacyl-tRNA synthetase family. HisZ subfamily. As to quaternary structure, heteromultimer composed of HisG and HisZ subunits.

The protein localises to the cytoplasm. It functions in the pathway amino-acid biosynthesis; L-histidine biosynthesis; L-histidine from 5-phospho-alpha-D-ribose 1-diphosphate: step 1/9. Functionally, required for the first step of histidine biosynthesis. May allow the feedback regulation of ATP phosphoribosyltransferase activity by histidine. In Rhizobium johnstonii (strain DSM 114642 / LMG 32736 / 3841) (Rhizobium leguminosarum bv. viciae), this protein is ATP phosphoribosyltransferase regulatory subunit.